The primary structure comprises 321 residues: Aspartate carbamoyltransferase catalytic subunit (321 aa).

Carbamoyl phosphate is bound by residues Arg-60 and Thr-61. Lys-88 serves as a coordination point for L-aspartate. 3 residues coordinate carbamoyl phosphate: Arg-110, His-138, and Gln-141. Positions 171 and 225 each coordinate L-aspartate. Gly-266 and Pro-267 together coordinate carbamoyl phosphate.

This sequence belongs to the aspartate/ornithine carbamoyltransferase superfamily. ATCase family. Heterododecamer (2C3:3R2) of six catalytic PyrB chains organized as two trimers (C3), and six regulatory PyrI chains organized as three dimers (R2).

The catalysed reaction is carbamoyl phosphate + L-aspartate = N-carbamoyl-L-aspartate + phosphate + H(+). The protein operates within pyrimidine metabolism; UMP biosynthesis via de novo pathway; (S)-dihydroorotate from bicarbonate: step 2/3. Functionally, catalyzes the condensation of carbamoyl phosphate and aspartate to form carbamoyl aspartate and inorganic phosphate, the committed step in the de novo pyrimidine nucleotide biosynthesis pathway. This Sorangium cellulosum (strain So ce56) (Polyangium cellulosum (strain So ce56)) protein is Aspartate carbamoyltransferase catalytic subunit.